Consider the following 309-residue polypeptide: Elongation factor Ts, mitochondrial (309 aa).

It belongs to the EF-Ts family.

Its subcellular location is the mitochondrion. Its function is as follows. Associates with the EF-Tu.GDP complex and induces the exchange of GDP to GTP. It remains bound to the aminoacyl-tRNA.EF-Tu.GTP complex up to the GTP hydrolysis stage on the ribosome. This Salmo salar (Atlantic salmon) protein is Elongation factor Ts, mitochondrial (tsfm).